Here is a 586-residue protein sequence, read N- to C-terminus: Nucleolar protein 58 (586 aa).

A Nop domain is found at 285 to 410 (IAPNLTALVG…LERKLAALEG (126 aa)). A compositionally biased stretch (acidic residues) spans 464-477 (QDEEMADADSDEEP). Residues 464-586 (QDEEMADADS…GKKKKKKRDD (123 aa)) are disordered. Composition is skewed to basic and acidic residues over residues 499–508 (KGSEIEKLAE) and 549–563 (AKKE…DDKE).

The protein belongs to the NOP5/NOP56 family.

The protein localises to the nucleus. It localises to the nucleolus. In terms of biological role, required for pre-18S rRNA processing. May bind microtubules. The protein is Nucleolar protein 58 (nop58) of Emericella nidulans (strain FGSC A4 / ATCC 38163 / CBS 112.46 / NRRL 194 / M139) (Aspergillus nidulans).